We begin with the raw amino-acid sequence, 83 residues long: Scyreptin (83 aa).

Cationic antimicrobial peptide that exhibits a potent and broad-spectrum antimicrobial activity against both bacteria and fungi, as well as against the multidrug-resistant bacteria P.aeruginosa. Exhibits rapid bactericidal kinetic. Acts by destroying the integrity of bacterial membranes, leading to bacterial death. Also exhibits potent anti-biofilm activity against P.aeruginosa. Shows high thermal stability and ion tolerance, as it maintains antibacterial activity even when heated to 100 degrees Celsius for 30 minutes and in presence of high levels of NaCl, CaCl(2) and MgCl(2). Does not show cytotoxicity and hemolytic activity. In a mouse model of burn infection, exhibits a remarkably reduction in the bacterial load caused by multidrug-resistant P.aeruginosa at the site of infection, and promotes wound healing. This is Scyreptin from Scylla paramamosain (Mud crab).